The primary structure comprises 293 residues: 4-hydroxy-tetrahydrodipicolinate synthase (293 aa).

A pyruvate-binding site is contributed by T45. Y133 serves as the catalytic Proton donor/acceptor. K161 acts as the Schiff-base intermediate with substrate in catalysis. A pyruvate-binding site is contributed by I203.

It belongs to the DapA family. Homotetramer; dimer of dimers.

The protein resides in the cytoplasm. The enzyme catalyses L-aspartate 4-semialdehyde + pyruvate = (2S,4S)-4-hydroxy-2,3,4,5-tetrahydrodipicolinate + H2O + H(+). Its pathway is amino-acid biosynthesis; L-lysine biosynthesis via DAP pathway; (S)-tetrahydrodipicolinate from L-aspartate: step 3/4. In terms of biological role, catalyzes the condensation of (S)-aspartate-beta-semialdehyde [(S)-ASA] and pyruvate to 4-hydroxy-tetrahydrodipicolinate (HTPA). The protein is 4-hydroxy-tetrahydrodipicolinate synthase of Aliivibrio fischeri (strain MJ11) (Vibrio fischeri).